The primary structure comprises 425 residues: Proline--tRNA ligase (425 aa).

The protein belongs to the class-II aminoacyl-tRNA synthetase family. ProS type 2 subfamily. As to quaternary structure, homodimer.

It is found in the cytoplasm. It catalyses the reaction tRNA(Pro) + L-proline + ATP = L-prolyl-tRNA(Pro) + AMP + diphosphate. In terms of biological role, catalyzes the attachment of proline to tRNA(Pro) in a two-step reaction: proline is first activated by ATP to form Pro-AMP and then transferred to the acceptor end of tRNA(Pro). The protein is Proline--tRNA ligase of Anaplasma marginale (strain St. Maries).